We begin with the raw amino-acid sequence, 417 residues long: D-galactonate dehydratase family member Dd703_0947 (417 aa).

Substrate is bound at residue H127. Catalysis depends on Y158, which acts as the Proton donor/acceptor. D223 serves as a coordination point for Mg(2+). The Proton donor/acceptor role is filled by H225. Positions 249 and 275 each coordinate Mg(2+). Substrate-binding residues include E275, R296, H325, D329, and E352.

Belongs to the mandelate racemase/muconate lactonizing enzyme family. GalD subfamily. Mg(2+) is required as a cofactor.

It carries out the reaction D-mannonate = 2-dehydro-3-deoxy-D-gluconate + H2O. The enzyme catalyses D-gluconate = 2-dehydro-3-deoxy-D-gluconate + H2O. Has low dehydratase activity with D-mannonate and D-gluconate, suggesting that these are not physiological substrates and that it has no significant role in the in vivo degradation of these compounds. Has no detectable activity with a panel of 70 other acid sugars (in vitro). This Musicola paradisiaca (strain Ech703) (Dickeya paradisiaca) protein is D-galactonate dehydratase family member Dd703_0947.